The chain runs to 161 residues: DNA-directed RNA polymerase III subunit RPC9 (161 aa).

The segment at 75–96 (QEDEGEERESSGAKDAEKSGIS) is disordered. The segment covering 82-96 (RESSGAKDAEKSGIS) has biased composition (basic and acidic residues).

It belongs to the eukaryotic RPC9 RNA polymerase subunit family. Component of the RNA polymerase III (Pol III) complex consisting of 17 subunits. Forms a Pol III subcomplex with RPC25/RPC8. Interacts with BURF1/TDS4.

Its subcellular location is the nucleus. Functionally, DNA-dependent RNA polymerase catalyzes the transcription of DNA into RNA using the four ribonucleoside triphosphates as substrates. Specific peripheric component of RNA polymerase III which synthesizes small RNAs, such as 5S rRNA and tRNAs. The RPC25/RPC8-RPC17/RPC9 subcomplex may bind Pol III transcripts emerging from the adjacent exit pore during elongation. The polypeptide is DNA-directed RNA polymerase III subunit RPC9 (RPC17) (Saccharomyces cerevisiae (strain ATCC 204508 / S288c) (Baker's yeast)).